A 314-amino-acid polypeptide reads, in one-letter code: tRNA uridine(34) hydroxylase (314 aa).

A Rhodanese domain is found at 140 to 234 (ARDDVILIDT…YLEETPPDES (95 aa)). Residue Cys-194 is the Cysteine persulfide intermediate of the active site.

It belongs to the TrhO family.

It carries out the reaction uridine(34) in tRNA + AH2 + O2 = 5-hydroxyuridine(34) in tRNA + A + H2O. Its function is as follows. Catalyzes oxygen-dependent 5-hydroxyuridine (ho5U) modification at position 34 in tRNAs. The polypeptide is tRNA uridine(34) hydroxylase (Acinetobacter baumannii (strain SDF)).